A 414-amino-acid chain; its full sequence is Esterase FrsA (414 aa).

The protein belongs to the FrsA family.

The catalysed reaction is a carboxylic ester + H2O = an alcohol + a carboxylate + H(+). Functionally, catalyzes the hydrolysis of esters. The sequence is that of Esterase FrsA from Escherichia coli O8 (strain IAI1).